The primary structure comprises 399 residues: Succinate--CoA ligase [ADP-forming] subunit beta (399 aa).

Residues 9–254 (KAVLQPFGVS…ETEEDAKEIE (246 aa)) enclose the ATP-grasp domain. ATP is bound by residues Lys-46, 53-55 (GRG), Glu-109, Ser-112, and Glu-117. Mg(2+) contacts are provided by Asn-209 and Asp-223. Substrate contacts are provided by residues Asn-274 and 331–333 (GIM).

This sequence belongs to the succinate/malate CoA ligase beta subunit family. Heterotetramer of two alpha and two beta subunits. It depends on Mg(2+) as a cofactor.

The catalysed reaction is succinate + ATP + CoA = succinyl-CoA + ADP + phosphate. The enzyme catalyses GTP + succinate + CoA = succinyl-CoA + GDP + phosphate. It participates in carbohydrate metabolism; tricarboxylic acid cycle; succinate from succinyl-CoA (ligase route): step 1/1. Succinyl-CoA synthetase functions in the citric acid cycle (TCA), coupling the hydrolysis of succinyl-CoA to the synthesis of either ATP or GTP and thus represents the only step of substrate-level phosphorylation in the TCA. The beta subunit provides nucleotide specificity of the enzyme and binds the substrate succinate, while the binding sites for coenzyme A and phosphate are found in the alpha subunit. This is Succinate--CoA ligase [ADP-forming] subunit beta from Rhodopseudomonas palustris (strain BisB18).